Reading from the N-terminus, the 196-residue chain is Peptidyl-tRNA hydrolase (196 aa).

Tyr-17 serves as a coordination point for tRNA. His-22 serves as the catalytic Proton acceptor. TRNA is bound by residues Phe-68, Asn-70, and Asn-116.

The protein belongs to the PTH family. As to quaternary structure, monomer.

The protein resides in the cytoplasm. It catalyses the reaction an N-acyl-L-alpha-aminoacyl-tRNA + H2O = an N-acyl-L-amino acid + a tRNA + H(+). Its function is as follows. Hydrolyzes ribosome-free peptidyl-tRNAs (with 1 or more amino acids incorporated), which drop off the ribosome during protein synthesis, or as a result of ribosome stalling. Catalyzes the release of premature peptidyl moieties from peptidyl-tRNA molecules trapped in stalled 50S ribosomal subunits, and thus maintains levels of free tRNAs and 50S ribosomes. This Serratia proteamaculans (strain 568) protein is Peptidyl-tRNA hydrolase.